The chain runs to 584 residues: Arginine--tRNA ligase (584 aa).

The short motif at 129 to 139 is the 'HIGH' region element; sequence ANPTGPLHVGH.

It belongs to the class-I aminoacyl-tRNA synthetase family. As to quaternary structure, monomer.

The protein localises to the cytoplasm. It catalyses the reaction tRNA(Arg) + L-arginine + ATP = L-arginyl-tRNA(Arg) + AMP + diphosphate. The sequence is that of Arginine--tRNA ligase from Halorhodospira halophila (strain DSM 244 / SL1) (Ectothiorhodospira halophila (strain DSM 244 / SL1)).